Here is a 427-residue protein sequence, read N- to C-terminus: MGGDLVLGLGALRRRKRLLEQEKSLAGWALVLAGTGIGLMVLHAEMLWFGGCSWALYLFLVKCTISISTFLLLCLIVAFHAKEVQLFMTDNGLRDWRVALTGRQAAQIVLELVVCGLHPAPVRGPPCVQDLGAPLTSPQPWPGFLGQGEALLSLAMLLRLYLVPRAVLLRSGVLLNASYRSIGALNQVRFRHWFVAKLYMNTHPGRLLLGLTLGLWLTTAWVLSVAERQAVNATGHLSDTLWLIPITFLTIGYGDVVPGTMWGKIVCLCTGVMGVCCTALLVAVVARKLEFNKAEKHVHNFMMDIQYTKEMKESAARVLQEAWMFYKHTRRKESHAARRHQRKLLAAINAFRQVRLKHRKLREQVNSMVDISKMHMILYDLQQNLSSSHRALEKQIDTLAGKLDALTELLSTALGPRQLPEPSQQSK.

The helical transmembrane segment at 29 to 49 (ALVLAGTGIGLMVLHAEMLWF) threads the bilayer. The chain crosses the membrane as a helical span at residues 59-79 (FLVKCTISISTFLLLCLIVAF). Residues 108 to 128 (IVLELVVCGLHPAPVRGPPCV) form a helical membrane-spanning segment. A helical transmembrane segment spans residues 143–163 (GFLGQGEALLSLAMLLRLYLV). Residues 207–227 (LLLGLTLGLWLTTAWVLSVAE) form a helical membrane-spanning segment. The segment at residues 241–261 (LWLIPITFLTIGYGDVVPGTM) is an intramembrane region (pore-forming). A helical membrane pass occupies residues 265–285 (IVCLCTGVMGVCCTALLVAVV). Positions 286–347 (ARKLEFNKAE…RRHQRKLLAA (62 aa)) are calmodulin-binding. Phosphohistidine is present on His358.

The protein belongs to the potassium channel KCNN family. KCa3.1/KCNN4 subfamily. In terms of assembly, homodimer. Homotetramer. Heterotetramer of potassium channel proteins. Interacts with MTMR6; this interaction leads to selective dephosphorylation of PI(3)P in a lipid microdomain adjacent to KCNN4, resulting in a decrease of intermediate conductance calcium-activated potassium channel activity. Interacts (via the C-tail domain) with CALM1; the calmodulin binding is constitutive, does not require calcium and mediates calcium-dependent gating and four calmodulin molecules bind to one channel tetramer. Post-translationally, phosphorylation at His-358 by NDKB activates the intermediate conductance calcium-activated potassium channel activity, and conversely it's dephosphorylation by PHPT1 inhibits this activity. As to expression, widely expressed in non-excitable tissues.

The protein resides in the cell membrane. The protein localises to the cell projection. Its subcellular location is the ruffle membrane. The enzyme catalyses K(+)(in) = K(+)(out). The channel is inhibited by clotrimazole and charybdotoxin but is insensitive to apamin. In terms of biological role, intermediate conductance calcium-activated potassium channel that mediates the voltage-independent transmembrane transfer of potassium across the cell membrane through a constitutive interaction with calmodulin which binds the intracellular calcium allowing its opening. The current is characterized by a voltage-independent activation, an intracellular calcium concentration increase-dependent activation and a single-channel conductance of about 25 picosiemens. Also presents an inwardly rectifying current, thus reducing its already small outward conductance of potassium ions, which is particularly the case when the membrane potential displays positive values, above + 20 mV. Controls calcium influx during vascular contractility by being responsible of membrane hyperpolarization induced by vasoactive factors in proliferative vascular smooth muscle cell types. Following calcium influx, the consecutive activation of KCNN4 channel leads to a hyperpolarization of the cell membrane potential and hence an increase of the electrical driving force for further calcium influx promoting sustained calcium entry in response to stimulation with chemotactic peptides. Required for maximal calcium influx and proliferation during the reactivation of naive T-cells. Plays a role in the late stages of EGF-induced macropinocytosis through activation by PI(3)P. The sequence is that of Intermediate conductance calcium-activated potassium channel protein 4 from Homo sapiens (Human).